A 35-amino-acid chain; its full sequence is Photosystem II reaction center protein T (35 aa).

A helical transmembrane segment spans residues 3–23 (ALVYTFLLVSTLGIIFFAIFF).

The protein belongs to the PsbT family. PSII is composed of 1 copy each of membrane proteins PsbA, PsbB, PsbC, PsbD, PsbE, PsbF, PsbH, PsbI, PsbJ, PsbK, PsbL, PsbM, PsbT, PsbY, PsbZ, Psb30/Ycf12, at least 3 peripheral proteins of the oxygen-evolving complex and a large number of cofactors. It forms dimeric complexes.

It is found in the plastid. The protein localises to the chloroplast thylakoid membrane. Functionally, found at the monomer-monomer interface of the photosystem II (PS II) dimer, plays a role in assembly and dimerization of PSII. PSII is a light-driven water plastoquinone oxidoreductase, using light energy to abstract electrons from H(2)O, generating a proton gradient subsequently used for ATP formation. The sequence is that of Photosystem II reaction center protein T from Stangeria eriopus (Natal grass cycad).